The following is a 122-amino-acid chain: Large ribosomal subunit protein uL14 (122 aa).

The protein belongs to the universal ribosomal protein uL14 family. As to quaternary structure, part of the 50S ribosomal subunit. Forms a cluster with proteins L3 and L19. In the 70S ribosome, L14 and L19 interact and together make contacts with the 16S rRNA in bridges B5 and B8.

Its function is as follows. Binds to 23S rRNA. Forms part of two intersubunit bridges in the 70S ribosome. This Neisseria meningitidis serogroup C (strain 053442) protein is Large ribosomal subunit protein uL14.